The primary structure comprises 361 residues: Spermidine/putrescine import ATP-binding protein PotA (361 aa).

The ABC transporter domain maps to 4–234 (LEIKNVVKRF…PKNRFVADFL (231 aa)). 36–43 (GPSGCGKT) contributes to the ATP binding site.

The protein belongs to the ABC transporter superfamily. Spermidine/putrescine importer (TC 3.A.1.11.1) family. The complex is composed of two ATP-binding proteins (PotA), two transmembrane proteins (PotB and PotC) and a solute-binding protein (PotD).

It localises to the cell inner membrane. It carries out the reaction ATP + H2O + polyamine-[polyamine-binding protein]Side 1 = ADP + phosphate + polyamineSide 2 + [polyamine-binding protein]Side 1.. Its function is as follows. Part of the ABC transporter complex PotABCD involved in spermidine/putrescine import. Responsible for energy coupling to the transport system. This is Spermidine/putrescine import ATP-binding protein PotA from Chromobacterium violaceum (strain ATCC 12472 / DSM 30191 / JCM 1249 / CCUG 213 / NBRC 12614 / NCIMB 9131 / NCTC 9757 / MK).